Here is a 128-residue protein sequence, read N- to C-terminus: Large ribosomal subunit protein bL17 (128 aa).

Belongs to the bacterial ribosomal protein bL17 family. As to quaternary structure, part of the 50S ribosomal subunit. Contacts protein L32.

The protein is Large ribosomal subunit protein bL17 of Streptococcus pyogenes serotype M49 (strain NZ131).